The following is a 311-amino-acid chain: Methionyl-tRNA formyltransferase (311 aa).

A (6S)-5,6,7,8-tetrahydrofolate-binding site is contributed by 110 to 113 (SLLP).

Belongs to the Fmt family.

The catalysed reaction is L-methionyl-tRNA(fMet) + (6R)-10-formyltetrahydrofolate = N-formyl-L-methionyl-tRNA(fMet) + (6S)-5,6,7,8-tetrahydrofolate + H(+). Attaches a formyl group to the free amino group of methionyl-tRNA(fMet). The formyl group appears to play a dual role in the initiator identity of N-formylmethionyl-tRNA by promoting its recognition by IF2 and preventing the misappropriation of this tRNA by the elongation apparatus. This is Methionyl-tRNA formyltransferase from Streptococcus uberis (strain ATCC BAA-854 / 0140J).